We begin with the raw amino-acid sequence, 379 residues long: Cytochrome b (379 aa).

The next 4 helical transmembrane spans lie at 34–54 (FGSL…LLAM), 78–99 (WFIR…YLHI), 114–134 (WNTG…GYVL), and 179–199 (FFAL…VHLT). Heme b is bound by residues histidine 84 and histidine 98. Heme b contacts are provided by histidine 183 and histidine 197. An a ubiquinone-binding site is contributed by histidine 202. 4 consecutive transmembrane segments (helical) span residues 227-247 (LKDI…AFFS), 289-309 (LGGV…PLLH), 321-341 (LSQL…WIGS), and 348-368 (FIII…VLFP).

The protein belongs to the cytochrome b family. As to quaternary structure, the cytochrome bc1 complex contains 11 subunits: 3 respiratory subunits (MT-CYB, CYC1 and UQCRFS1), 2 core proteins (UQCRC1 and UQCRC2) and 6 low-molecular weight proteins (UQCRH/QCR6, UQCRB/QCR7, UQCRQ/QCR8, UQCR10/QCR9, UQCR11/QCR10 and a cleavage product of UQCRFS1). This cytochrome bc1 complex then forms a dimer. Heme b serves as cofactor.

It localises to the mitochondrion inner membrane. In terms of biological role, component of the ubiquinol-cytochrome c reductase complex (complex III or cytochrome b-c1 complex) that is part of the mitochondrial respiratory chain. The b-c1 complex mediates electron transfer from ubiquinol to cytochrome c. Contributes to the generation of a proton gradient across the mitochondrial membrane that is then used for ATP synthesis. The protein is Cytochrome b (MT-CYB) of Struthio camelus (Common ostrich).